A 132-amino-acid polypeptide reads, in one-letter code: Small ribosomal subunit protein uS8 (132 aa).

It belongs to the universal ribosomal protein uS8 family. In terms of assembly, part of the 30S ribosomal subunit. Contacts proteins S5 and S12.

In terms of biological role, one of the primary rRNA binding proteins, it binds directly to 16S rRNA central domain where it helps coordinate assembly of the platform of the 30S subunit. The polypeptide is Small ribosomal subunit protein uS8 (Francisella tularensis subsp. tularensis (strain FSC 198)).